Consider the following 345-residue polypeptide: Heat-inducible transcription repressor HrcA (345 aa).

The protein belongs to the HrcA family.

In terms of biological role, negative regulator of class I heat shock genes (grpE-dnaK-dnaJ and groELS operons). Prevents heat-shock induction of these operons. The polypeptide is Heat-inducible transcription repressor HrcA (Listeria monocytogenes serotype 1/2a (strain 10403S)).